Consider the following 251-residue polypeptide: MLGREDIRTYQVYLANEKKLAPGSIHIALSALRFFFNVTLERDWAPEEVLPLPKKPQKLPIILSPDEVQHFLGCVADVKHHAILTTCYAAGLRISEAVQLKPTDIDSQRMVVRVEHGKGQKDRYVMLSPKLLEILRDYWRMWRPEAWLFPGDRAGHPITRYAVGQACVKPHDLSRLSKPVTPHSLRHAFVVHLLEAGADVRTIQPLLGHRSLATTAHYLRIATNKVCATESPFELLPRPAPTPPPSKPQYF.

The Core-binding (CB) domain maps to 1–40; that stretch reads MLGREDIRTYQVYLANEKKLAPGSIHIALSALRFFFNVTL. Residues 58-231 form the Tyr recombinase domain; the sequence is KLPIILSPDE…ATNKVCATES (174 aa). Residues R93, K118, H183, R186, and H209 contribute to the active site. Residue Y218 is the O-(3'-phospho-DNA)-tyrosine intermediate of the active site.

Belongs to the 'phage' integrase family.

This Sinorhizobium fredii (strain NBRC 101917 / NGR234) protein is Putative integrase/recombinase y4eF.